The chain runs to 853 residues: Transcription factor CPH2 (853 aa).

2 disordered regions span residues 165–209 and 296–353; these read EPPI…DKNS and NMNP…VHHP. Residues 180-194 show a composition bias toward low complexity; sequence TTTVSSTNSITNTTK. The bHLH domain occupies 205–274; that stretch reads KDKNSHNMIE…TKATEYIKHL (70 aa). Residues 301 to 315 are compositionally biased toward pro residues; it reads SLPPPPQQMQAPPQP. Residues 330-352 are compositionally biased toward low complexity; it reads TPASQYPSPQQQVSPTQQQTVHH.

Its subcellular location is the nucleus. Functionally, transcription factor that positively controls filamentous growth, virulence, and invasiveness. Binds directly to the two SRE-1-like elements upstream of TEC1 and thus positively regulates expression of this important hyphal growth regulator. Functions independently of known signaling cascades involving EFG1. Also regulates gene expression during intestinal colonization but is not involved in host cell adhesion. In Candida albicans (strain SC5314 / ATCC MYA-2876) (Yeast), this protein is Transcription factor CPH2 (CPH2).